Reading from the N-terminus, the 593-residue chain is Aspartate--tRNA ligase (593 aa).

Glu-180 contacts L-aspartate. The aspartate stretch occupies residues 204-207; the sequence is QLFK. Position 226 (Arg-226) interacts with L-aspartate. ATP-binding positions include 226–228 and Gln-235; that span reads RDE. His-454 lines the L-aspartate pocket. Glu-488 lines the ATP pocket. Residue Arg-495 coordinates L-aspartate. Position 540 to 543 (540 to 543) interacts with ATP; that stretch reads GFDR.

The protein belongs to the class-II aminoacyl-tRNA synthetase family. Type 1 subfamily. As to quaternary structure, homodimer.

The protein localises to the cytoplasm. It carries out the reaction tRNA(Asp) + L-aspartate + ATP = L-aspartyl-tRNA(Asp) + AMP + diphosphate. Its function is as follows. Catalyzes the attachment of L-aspartate to tRNA(Asp) in a two-step reaction: L-aspartate is first activated by ATP to form Asp-AMP and then transferred to the acceptor end of tRNA(Asp). The sequence is that of Aspartate--tRNA ligase from Clostridium novyi (strain NT).